Here is a 404-residue protein sequence, read N- to C-terminus: Pleckstrin homology domain-containing family A member 1 (404 aa).

2 PH domains span residues 7 to 112 (QNRI…KAIK) and 191 to 289 (AVIK…GAIV). 2 disordered regions span residues 291–332 (QRGP…RSNS) and 355–404 (NFKV…VSDV). The segment covering 316 to 332 (TNAATATSHSTASRSNS) has biased composition (low complexity). A phosphoserine mark is found at Ser332 and Ser362.

In terms of assembly, interacts with MPDZ and PTPN13. In terms of tissue distribution, highly expressed in skeletal muscle, thymus, pancreas, placenta and lung. Detected at low levels in brain, heart, peripheral blood leukocytes, testis, ovary, spinal cord, thyroid, kidney, liver, small intestine and colon.

The protein localises to the cytoplasm. It localises to the cell membrane. It is found in the nucleus. Functionally, binds specifically to phosphatidylinositol 3,4-diphosphate (PtdIns3,4P2), but not to other phosphoinositides. May recruit other proteins to the plasma membrane. The polypeptide is Pleckstrin homology domain-containing family A member 1 (PLEKHA1) (Homo sapiens (Human)).